The sequence spans 631 residues: 1-deoxy-D-xylulose-5-phosphate synthase (631 aa).

Thiamine diphosphate-binding positions include His73 and 114 to 116 (GHS). Position 145 (Asp145) interacts with Mg(2+). Thiamine diphosphate-binding positions include 146–147 (GA), Asn174, Tyr285, and Glu366. Asn174 is a binding site for Mg(2+).

Belongs to the transketolase family. DXPS subfamily. Homodimer. It depends on Mg(2+) as a cofactor. Thiamine diphosphate serves as cofactor.

It catalyses the reaction D-glyceraldehyde 3-phosphate + pyruvate + H(+) = 1-deoxy-D-xylulose 5-phosphate + CO2. The protein operates within metabolic intermediate biosynthesis; 1-deoxy-D-xylulose 5-phosphate biosynthesis; 1-deoxy-D-xylulose 5-phosphate from D-glyceraldehyde 3-phosphate and pyruvate: step 1/1. In terms of biological role, catalyzes the acyloin condensation reaction between C atoms 2 and 3 of pyruvate and glyceraldehyde 3-phosphate to yield 1-deoxy-D-xylulose-5-phosphate (DXP). The chain is 1-deoxy-D-xylulose-5-phosphate synthase from Desulfitobacterium hafniense (strain DSM 10664 / DCB-2).